The sequence spans 371 residues: Protein NDRG2 (371 aa).

Residues 1-22 (MAELQEVQITEEKPLLPGQTPE) are disordered. The residue at position 2 (Ala-2) is an N-acetylalanine. Thr-20 carries the phosphothreonine modification. Phosphoserine is present on residues Ser-326 and Ser-328. At Thr-330 the chain carries Phosphothreonine. Ser-332 carries the phosphoserine modification. Position 334 is a phosphothreonine (Thr-334). Residues 334 to 371 (TSAASIDGSRSRSRTLSQSSESGTLPSGPPGHTMEVSC) form a disordered region. 3 positions are modified to phosphoserine: Ser-335, Ser-338, and Ser-344. Thr-348 carries the phosphothreonine modification. Ser-350, Ser-352, Ser-353, and Ser-355 each carry phosphoserine. Thr-357 carries the post-translational modification Phosphothreonine. Position 370 is a phosphoserine (Ser-370).

The protein belongs to the NDRG family. In terms of tissue distribution, broadly expressed, with highest levels in heart, liver, skeletal muscle and aorta.

It localises to the cytoplasm. Its subcellular location is the perinuclear region. It is found in the cell projection. The protein localises to the growth cone. In terms of biological role, contributes to the regulation of the Wnt signaling pathway. Down-regulates CTNNB1-mediated transcriptional activation of target genes, such as CCND1, and may thereby act as tumor suppressor. May be involved in dendritic cell and neuron differentiation. The protein is Protein NDRG2 (Ndrg2) of Rattus norvegicus (Rat).